The following is a 491-amino-acid chain: Monodehydroascorbate reductase 5, chlorplastic (491 aa).

A chloroplast-targeting transit peptide spans 1-42 (MASTAAAASSQGCISWALRQRGLGGGGARAVPVLPRRRFCVS). FAD-binding positions include 61 to 64 (GGNA), Glu88, Arg95, Lys100, and 194 to 195 (RD). Residues 217–223 (GGYIGME), Glu241, Arg247, and Gly306 contribute to the NAD(+) site. 219–223 (YIGME) provides a ligand contact to NADP(+). The NADP(+) site is built by Arg247 and Gly306. Asp344 contacts FAD. 360–361 (EH) contacts NAD(+). 360-361 (EH) provides a ligand contact to NADP(+). Val362 lines the FAD pocket. Arg366 is an L-ascorbate binding site. Tyr391 provides a ligand contact to FAD. Tyr391 is an NAD(+) binding site. An NADP(+)-binding site is contributed by Tyr391. Arg393 is a binding site for L-ascorbate.

This sequence belongs to the FAD-dependent oxidoreductase family. Requires FAD as cofactor.

The protein resides in the plastid. The protein localises to the chloroplast. It carries out the reaction 2 monodehydro-L-ascorbate radical + NADH + H(+) = 2 L-ascorbate + NAD(+). In terms of biological role, catalyzes the conversion of monodehydroascorbate to ascorbate, oxidizing NADH in the process. Ascorbate is a major antioxidant against reactive oxygen species (ROS) and nitric oxide (NO). The chain is Monodehydroascorbate reductase 5, chlorplastic from Oryza sativa subsp. japonica (Rice).